Here is a 555-residue protein sequence, read N- to C-terminus: Membrane protein insertase YidC (555 aa).

The helical transmembrane segment at 7 to 24 (ILWVIFSMSLVLLYDNWQ) threads the bilayer. 2 stretches are compositionally biased toward low complexity: residues 40–54 (QQAA…TPQA) and 64–81 (AAPG…QPVG). Residues 40–81 (QQAAPAGAGGATPQADVPKANATNAAPGTVPAAPQAAAQPVG) are disordered. 5 helical membrane passes run 334–354 (LELV…FWLL), 360–380 (FLGN…LVFF), 430–450 (LGGC…YWVL), 468–488 (LSVP…MFVQ), and 503–523 (VMMI…AGLV).

The protein belongs to the OXA1/ALB3/YidC family. Type 1 subfamily. In terms of assembly, interacts with the Sec translocase complex via SecD. Specifically interacts with transmembrane segments of nascent integral membrane proteins during membrane integration.

The protein localises to the cell inner membrane. Functionally, required for the insertion and/or proper folding and/or complex formation of integral membrane proteins into the membrane. Involved in integration of membrane proteins that insert both dependently and independently of the Sec translocase complex, as well as at least some lipoproteins. Aids folding of multispanning membrane proteins. The polypeptide is Membrane protein insertase YidC (Cupriavidus metallidurans (strain ATCC 43123 / DSM 2839 / NBRC 102507 / CH34) (Ralstonia metallidurans)).